Here is a 240-residue protein sequence, read N- to C-terminus: Pyridoxine 5'-phosphate synthase (240 aa).

N7 provides a ligand contact to 3-amino-2-oxopropyl phosphate. 9–10 is a binding site for 1-deoxy-D-xylulose 5-phosphate; sequence DH. R18 provides a ligand contact to 3-amino-2-oxopropyl phosphate. The Proton acceptor role is filled by H43. The 1-deoxy-D-xylulose 5-phosphate site is built by R45 and H50. The Proton acceptor role is filled by E70. T100 serves as a coordination point for 1-deoxy-D-xylulose 5-phosphate. Residue H191 is the Proton donor of the active site. 3-amino-2-oxopropyl phosphate is bound by residues G192 and 213–214; that span reads GH.

This sequence belongs to the PNP synthase family. In terms of assembly, homooctamer; tetramer of dimers.

It is found in the cytoplasm. The catalysed reaction is 3-amino-2-oxopropyl phosphate + 1-deoxy-D-xylulose 5-phosphate = pyridoxine 5'-phosphate + phosphate + 2 H2O + H(+). It participates in cofactor biosynthesis; pyridoxine 5'-phosphate biosynthesis; pyridoxine 5'-phosphate from D-erythrose 4-phosphate: step 5/5. In terms of biological role, catalyzes the complicated ring closure reaction between the two acyclic compounds 1-deoxy-D-xylulose-5-phosphate (DXP) and 3-amino-2-oxopropyl phosphate (1-amino-acetone-3-phosphate or AAP) to form pyridoxine 5'-phosphate (PNP) and inorganic phosphate. The protein is Pyridoxine 5'-phosphate synthase of Crocosphaera subtropica (strain ATCC 51142 / BH68) (Cyanothece sp. (strain ATCC 51142)).